The sequence spans 378 residues: Carbamoyl phosphate synthase small chain (378 aa).

Residues 1–189 (MTKPAILALA…DSHPEIAASE (189 aa)) form a CPSase region. L-glutamine-binding residues include Ser47, Gly241, and Gly243. Residues 193-378 (HVVAYDYGVK…RFIDAMAKRR (186 aa)) enclose the Glutamine amidotransferase type-1 domain. Residue Cys269 is the Nucleophile of the active site. Residues Leu270, Gln273, Asn311, Gly313, and Phe314 each coordinate L-glutamine. Catalysis depends on residues His353 and Glu355.

This sequence belongs to the CarA family. As to quaternary structure, composed of two chains; the small (or glutamine) chain promotes the hydrolysis of glutamine to ammonia, which is used by the large (or ammonia) chain to synthesize carbamoyl phosphate. Tetramer of heterodimers (alpha,beta)4.

It carries out the reaction hydrogencarbonate + L-glutamine + 2 ATP + H2O = carbamoyl phosphate + L-glutamate + 2 ADP + phosphate + 2 H(+). The catalysed reaction is L-glutamine + H2O = L-glutamate + NH4(+). It functions in the pathway amino-acid biosynthesis; L-arginine biosynthesis; carbamoyl phosphate from bicarbonate: step 1/1. The protein operates within pyrimidine metabolism; UMP biosynthesis via de novo pathway; (S)-dihydroorotate from bicarbonate: step 1/3. Small subunit of the glutamine-dependent carbamoyl phosphate synthetase (CPSase). CPSase catalyzes the formation of carbamoyl phosphate from the ammonia moiety of glutamine, carbonate, and phosphate donated by ATP, constituting the first step of 2 biosynthetic pathways, one leading to arginine and/or urea and the other to pyrimidine nucleotides. The small subunit (glutamine amidotransferase) binds and cleaves glutamine to supply the large subunit with the substrate ammonia. This Pseudomonas syringae pv. tomato (strain ATCC BAA-871 / DC3000) protein is Carbamoyl phosphate synthase small chain.